The primary structure comprises 405 residues: Argininosuccinate synthase (405 aa).

Residue 11–19 coordinates ATP; that stretch reads AYSGGLDTS. Y90 contacts L-citrulline. G119 serves as a coordination point for ATP. Residues T121, N125, and D126 each contribute to the L-aspartate site. Residue N125 participates in L-citrulline binding. Residues R129, S178, S187, E263, and Y275 each coordinate L-citrulline.

The protein belongs to the argininosuccinate synthase family. Type 1 subfamily. Homotetramer.

The protein localises to the cytoplasm. The enzyme catalyses L-citrulline + L-aspartate + ATP = 2-(N(omega)-L-arginino)succinate + AMP + diphosphate + H(+). It functions in the pathway amino-acid biosynthesis; L-arginine biosynthesis; L-arginine from L-ornithine and carbamoyl phosphate: step 2/3. This chain is Argininosuccinate synthase, found in Legionella pneumophila (strain Paris).